The sequence spans 408 residues: Aspartokinase 2 (408 aa).

7 to 10 (KFGG) lines the ATP pocket. 25-30 (RAIAEK) contributes to the substrate binding site. Serine 41 is an ATP binding site. Substrate-binding positions include 47 to 49 (TDE), glutamate 74, 125 to 126 (LE), 150 to 153 (RGGS), and serine 153. ATP contacts are provided by residues 173 to 174 (TD) and 179 to 184 (FTTDPR). ACT domains are found at residues 264–337 (VTIY…TESK) and 343–408 (IVGS…PSAV). Substrate contacts are provided by residues 289-291 (NVD), glutamine 295, 354-355 (VA), 368-369 (LI), and 375-376 (SE).

It belongs to the aspartokinase family. As to quaternary structure, tetramer consisting of 2 isoforms Alpha (catalytic and regulation) and of a homodimer of 2 isoforms Beta (regulation).

It catalyses the reaction L-aspartate + ATP = 4-phospho-L-aspartate + ADP. It functions in the pathway amino-acid biosynthesis; L-lysine biosynthesis via DAP pathway; (S)-tetrahydrodipicolinate from L-aspartate: step 1/4. The protein operates within amino-acid biosynthesis; L-methionine biosynthesis via de novo pathway; L-homoserine from L-aspartate: step 1/3. Its pathway is amino-acid biosynthesis; L-threonine biosynthesis; L-threonine from L-aspartate: step 1/5. Its activity is regulated as follows. Lysine-sensitive. Regulated by degradation in response to starvation of cells for various nutrients. Ammonium starvation induced the fastest aspartokinase II decline, followed by amino acid starvation and glucose limitation. Catalyzes the phosphorylation of the beta-carboxyl group of aspartic acid with ATP to yield 4-phospho-L-aspartate, which is involved in the branched biosynthetic pathway leading to the biosynthesis of amino acids threonine, isoleucine and methionine. This chain is Aspartokinase 2 (lysC), found in Bacillus subtilis (strain 168).